The following is a 388-amino-acid chain: METKLTTVGVIGGGQLAWMMAQEAPRLGLKLAVQTPGESDPAVALADKVVLTAIADGEGTRELAEHCGVITFENEFVDLPSLEKLAQQGITFHPRLDALAPLLDKWEQRHFLQNLGLPVPDFWALESLPAQLPDFPWVLKARRHGYDGQGTQIINSPADLPDLSKAPPGSWMVESFVPYERELAVIGVRNARGEMEIYPVVETKQIDQVCRWVVAPAPIDAAIAATAQDYCRRILNHLDYVGILAIEFFLLPASTQTPTPEQRLLVNELAPRTHNSGHFSLDACHTSQFALQLQAVTGQTLGSSALRCGQAVMVNLLGYEVSTGDYQQQLDKLAALPHSHVHWYGKGDCRPGRKLGHVTLLNPDVESEPSTAWAEDLVKQVEAIWYPD.

Residues K105, K140, 174–177 (ESFV), E182, and 267–268 (NE) each bind ATP. The region spanning 109–297 (RHFLQNLGLP…QFALQLQAVT (189 aa)) is the ATP-grasp domain.

The protein belongs to the PurK/PurT family. Homodimer.

It catalyses the reaction 5-amino-1-(5-phospho-beta-D-ribosyl)imidazole + hydrogencarbonate + ATP = 5-carboxyamino-1-(5-phospho-D-ribosyl)imidazole + ADP + phosphate + 2 H(+). The protein operates within purine metabolism; IMP biosynthesis via de novo pathway; 5-amino-1-(5-phospho-D-ribosyl)imidazole-4-carboxylate from 5-amino-1-(5-phospho-D-ribosyl)imidazole (N5-CAIR route): step 1/2. Catalyzes the ATP-dependent conversion of 5-aminoimidazole ribonucleotide (AIR) and HCO(3)(-) to N5-carboxyaminoimidazole ribonucleotide (N5-CAIR). This chain is N5-carboxyaminoimidazole ribonucleotide synthase, found in Synechocystis sp. (strain ATCC 27184 / PCC 6803 / Kazusa).